A 164-amino-acid polypeptide reads, in one-letter code: ATP synthase subunit b (164 aa).

Residues 8–28 (IGLFFWQTIVFLILLFLMAKF) traverse the membrane as a helical segment.

The protein belongs to the ATPase B chain family. In terms of assembly, F-type ATPases have 2 components, F(1) - the catalytic core - and F(0) - the membrane proton channel. F(1) has five subunits: alpha(3), beta(3), gamma(1), delta(1), epsilon(1). F(0) has three main subunits: a(1), b(2) and c(10-14). The alpha and beta chains form an alternating ring which encloses part of the gamma chain. F(1) is attached to F(0) by a central stalk formed by the gamma and epsilon chains, while a peripheral stalk is formed by the delta and b chains.

Its subcellular location is the cell membrane. Functionally, f(1)F(0) ATP synthase produces ATP from ADP in the presence of a proton or sodium gradient. F-type ATPases consist of two structural domains, F(1) containing the extramembraneous catalytic core and F(0) containing the membrane proton channel, linked together by a central stalk and a peripheral stalk. During catalysis, ATP synthesis in the catalytic domain of F(1) is coupled via a rotary mechanism of the central stalk subunits to proton translocation. Component of the F(0) channel, it forms part of the peripheral stalk, linking F(1) to F(0). The sequence is that of ATP synthase subunit b from Christiangramia forsetii (strain DSM 17595 / CGMCC 1.15422 / KT0803) (Gramella forsetii).